A 190-amino-acid polypeptide reads, in one-letter code: RING finger protein 227 (190 aa).

An RING-type zinc finger spans residues 18-81; that stretch reads CNICFRPYNL…RRAVTCPFCR (64 aa). The disordered stretch occupies residues 108 to 147; that stretch reads ARAEREGDPMGSPAKDSGEDGEDDDGEAESEKGAGPPSAG. A compositionally biased stretch (acidic residues) spans 126–135; that stretch reads EDGEDDDGEA.

The sequence is that of RING finger protein 227 from Mus musculus (Mouse).